A 480-amino-acid chain; its full sequence is Na(+)/H(+) antiporter NhaA (480 aa).

Transmembrane regions (helical) follow at residues 34-54, 76-96, 113-133, 144-164, 174-194, 197-217, 223-243, 282-302, 312-332, 350-370, and 381-401; these read VGGV…NIPA, LSVA…VAGI, AVLP…VYTL, GWAV…AVIG, FLLT…AIFF, RINF…WLLL, GWYV…NSGV, GLAV…GGAL, LGVV…STWL, IFAV…IGEL, and EVKA…TVLL. The tract at residues 454-480 is disordered; the sequence is AAEKAAAARHGGAEVPGGAGEEDGRPA.

Belongs to the NhaA Na(+)/H(+) (TC 2.A.33) antiporter family.

Its subcellular location is the cell membrane. The catalysed reaction is Na(+)(in) + 2 H(+)(out) = Na(+)(out) + 2 H(+)(in). Functionally, na(+)/H(+) antiporter that extrudes sodium in exchange for external protons. This Streptomyces antibioticus protein is Na(+)/H(+) antiporter NhaA.